Here is a 1436-residue protein sequence, read N- to C-terminus: MMNNRNNNKDKNPVKRFNKISIGLASPESILKESRGEVLKPETINYRTHKPERDGLFCERIFGPVKDFECACGKYKRIRYKGIICDRCGVEVTEKKVRRDRVGHINLVVPIAHIWYFRSLPNKIGYILGLPSKKLDMIIYYERYVVIQAGIAKNADGESLQRLDFLTEEEYLNILDTLPQENQYLDDLDPNKFVAKMGAECIMDLLARIDLDALSYELRHSANNETSKQRKTEALKRLQVVESFRESNENRENRPEWMIMKVVPVIPPELRPLVPLDGGRFATSDLNDLYRRVIIRNNRLKRLMEIKAPEVILRNEKRMLQESVDSLFDNTRKASAVKTESNRPLKSLSDSLKGKQGRFRQNLLGKRVDYSARSVIVVGPELKLYECGLPKDMASELYKPFVIRKLIERGIVKTVKSAKKIIDKKEPVVWDILENVIKGHPVLLNRAPTLHRLGIQAFQPKLIEGKAIQLHPLVCTAFNADFDGDQMAVHLPLGPEAILEAQLLMLASHNILNPANGAPITVPSQDMVLGLYYMTKERISTEDHIILGQDLTFYSAEEVNIALNEGRLELNARVKIRAKDFNDAGELVYKIIQTTAGRVLFNEVVPEAAGYINDVLTKKNLRDIIGHILSVTDVPTTAAFLDNMKDMGYKFAFRGGLSFSLGDIRIPEQKTKLIADAREQVEGISTNYNMGLITNNERYNQVIDVWTSANAQLTELAMKNIREDQQGFNSVYMMLDSGARGSKEQIRQLTGMRGLMAKPKKSTAGGGEIIENPILSNFKEGLSILEYFISTHGARKGLADTALKTADAGYLTRRLHDVSQDVIVNIEDCGTLRGVEVAALKKNEEIVESLGERILGRVALQDVINPLTNEVMVQSGQQITEAIVKTIEASPIEKVEVRSPLTCEALKGICAKCYGRNLATGKMTQRGEAVGVIAAQSIGEPGTQLTLRTFHVGGVAGGISEESSIVTRFAGRLEIEDLKTVKGEDSEGNAVDIVVSRSTELKLVDEGTGIVLNTHNIPYGSSIFVKDGETVGKGTVICKWDPYNGVIVSEFTGKIAYEDLEQGQSFMVEIDEQTGFQEKVISEARNKKLIPTLLVYGKEGELIRSYNLPVGAHLMVENGEKIKAGKVLVKIPRRSSKAGDITGGLPRITELLEARNPSNPAVVSEIDGVVSFGKIKRGNREIVIESKFGEIKKYLVKLSSQILVQENDFVRAGVPLSDGAITPDDILRIQGPAAVQQYLVNEIQEVYRLQGVKINDKHFEVVIRQMMRKVKVEDPGDTLFLEDQLIHTKDFILQNDKLYGMKVVEDAGDSSVLKPGQIISPRELRDENSLLKRTDKNLVVARDVITATATPVLQGITRASLQTKSFISAASFQETTKVLNEAAVAGKVDDLEGLKENVIVGHRIPAGTGMREYDNTIVGSKDDYNEMMANKEEYIY.

Residues Cys-70, Cys-72, Cys-85, and Cys-88 each coordinate Zn(2+). Mg(2+) is bound by residues Asp-481, Asp-483, and Asp-485. The Zn(2+) site is built by Cys-829, Cys-903, Cys-910, and Cys-913.

It belongs to the RNA polymerase beta' chain family. As to quaternary structure, the RNAP catalytic core consists of 2 alpha, 1 beta, 1 beta' and 1 omega subunit. When a sigma factor is associated with the core the holoenzyme is formed, which can initiate transcription. The cofactor is Mg(2+). Requires Zn(2+) as cofactor.

It carries out the reaction RNA(n) + a ribonucleoside 5'-triphosphate = RNA(n+1) + diphosphate. In terms of biological role, DNA-dependent RNA polymerase catalyzes the transcription of DNA into RNA using the four ribonucleoside triphosphates as substrates. This is DNA-directed RNA polymerase subunit beta' from Flavobacterium johnsoniae (strain ATCC 17061 / DSM 2064 / JCM 8514 / BCRC 14874 / CCUG 350202 / NBRC 14942 / NCIMB 11054 / UW101) (Cytophaga johnsonae).